The chain runs to 122 residues: MIQPQTRLKVADNTGAKEIMCIRVLGGSRVRYGRVGDIIVASVKEATPGGQVKKGDVVKAVIIRTAKEYGRPDGSHIRFDDNAAVLIGKENNPRGTRIFGPVARELREKQFMRIVSLAPEVL.

It belongs to the universal ribosomal protein uL14 family. In terms of assembly, part of the 50S ribosomal subunit. Forms a cluster with proteins L3 and L19. In the 70S ribosome, L14 and L19 interact and together make contacts with the 16S rRNA in bridges B5 and B8.

Functionally, binds to 23S rRNA. Forms part of two intersubunit bridges in the 70S ribosome. This Chloroflexus aggregans (strain MD-66 / DSM 9485) protein is Large ribosomal subunit protein uL14.